The primary structure comprises 109 residues: Nucleoid-associated protein VC_1055 (109 aa).

The tract at residues 1-22 is disordered; the sequence is MFGKGGMGNLMKQAQQMQERMQ.

It belongs to the YbaB/EbfC family. In terms of assembly, homodimer.

The protein localises to the cytoplasm. It localises to the nucleoid. Its function is as follows. Binds to DNA and alters its conformation. May be involved in regulation of gene expression, nucleoid organization and DNA protection. The polypeptide is Nucleoid-associated protein VC_1055 (Vibrio cholerae serotype O1 (strain ATCC 39315 / El Tor Inaba N16961)).